The primary structure comprises 55 residues: U-reduvitoxin-Pr2a (55 aa).

A signal peptide spans 1 to 21; it reads MMKFLLVLFLITITLITMAYS. 3 disulfide bridges follow: Cys-26–Cys-41, Cys-33–Cys-46, and Cys-40–Cys-51.

Belongs to the venom Ptu1-like knottin family. Expressed by the venom gland (posterior main gland) (at protein level).

The protein resides in the secreted. Binds reversibly and blocks P/Q-type voltage-gated calcium channels (Cav). The polypeptide is U-reduvitoxin-Pr2a (Platymeris rhadamanthus (Red spot assassin bug)).